The primary structure comprises 311 residues: MIASYRGRDFLSMNDLTGEEIEEVLDLASELKIRQKKGISTPILKGKTLAMIFSKNSTRTRVSFEVGMVQLGGYPLFITATDSQLSRGEPIADTARVLSRMVDGIMIRTYSHSEVEELAYYADVPVINGLTDYEHPCQIMADLLTIKEHKGQLRGLKVAWVGDGNNVCHSLMIGAAKVGMEVAVATPPGYEPDQKVSLIAQKETSRWGTKLLLTHDPVEAVTGADVVVTDVWASMGQEAESAERVKVFEPYQVNGELVSHAKQDFIFLHCLPAHRGEEVTAEVIDGEHSVVFAEAENRLHAQKAILTLLLG.

Residues 57 to 60 (STRT), Gln84, Arg108, and 135 to 138 (HPCQ) each bind carbamoyl phosphate. L-ornithine contacts are provided by residues Asn166, Asp230, and 234–235 (SM). Carbamoyl phosphate is bound by residues 270–271 (CL) and Arg298.

Belongs to the aspartate/ornithine carbamoyltransferase superfamily. OTCase family.

Its subcellular location is the cytoplasm. It catalyses the reaction carbamoyl phosphate + L-ornithine = L-citrulline + phosphate + H(+). It participates in amino-acid biosynthesis; L-arginine biosynthesis; L-arginine from L-ornithine and carbamoyl phosphate: step 1/3. Reversibly catalyzes the transfer of the carbamoyl group from carbamoyl phosphate (CP) to the N(epsilon) atom of ornithine (ORN) to produce L-citrulline. The sequence is that of Ornithine carbamoyltransferase from Carboxydothermus hydrogenoformans (strain ATCC BAA-161 / DSM 6008 / Z-2901).